The following is a 510-amino-acid chain: JmjC domain-containing histone demethylation protein 1 (510 aa).

The segment at 2 to 53 (PNRCDFCTSSSTKDKQQWTQCDGCDRWVHDVCVSITDPVSYAKYHCPTCTKT) adopts a PHD-type zinc-finger fold. One can recognise a JmjC domain in the interval 216 to 365 (TLVRELDLVD…TQIDIAGIEV (150 aa)). A substrate-binding site is contributed by threonine 255. 2 residues coordinate Fe cation: histidine 258 and aspartate 260. Lysine 275 lines the substrate pocket. Histidine 333 contributes to the Fe cation binding site. Positions 475 to 510 (KGESKEKHKIESQLPEEKILQGSKLESKEEVQTENF) are disordered. Positions 477–510 (ESKEKHKIESQLPEEKILQGSKLESKEEVQTENF) are enriched in basic and acidic residues.

It belongs to the JHDM1 histone demethylase family. The cofactor is Fe(2+).

It localises to the nucleus. The enzyme catalyses N(6),N(6)-dimethyl-L-lysyl(36)-[histone H3] + 2 2-oxoglutarate + 2 O2 = L-lysyl(36)-[histone H3] + 2 formaldehyde + 2 succinate + 2 CO2. Histone demethylase that specifically demethylates 'Lys-36' of histone H3, thereby playing a central role in histone code. This chain is JmjC domain-containing histone demethylation protein 1 (JHD1), found in Yarrowia lipolytica (strain CLIB 122 / E 150) (Yeast).